The primary structure comprises 633 residues: Probable potassium transport system protein Kup 2 (633 aa).

The next 12 membrane-spanning stretches (helical) occupy residues 18-38 (FVGL…TSPL), 61-81 (LISL…VLFL), 107-127 (VPVL…DAMI), 143-163 (ITPA…IVLF), 176-196 (FFGP…VIHI), 211-231 (ALSF…AVFL), 255-275 (WFVL…ALVL), 293-313 (ALLP…QAVI), 345-365 (IYVP…IFSF), 371-391 (LATA…MLAF), 402-422 (FMLA…FLAA), and 429-449 (DGGW…WTWT).

Belongs to the HAK/KUP transporter (TC 2.A.72) family.

The protein resides in the cell inner membrane. It catalyses the reaction K(+)(in) + H(+)(in) = K(+)(out) + H(+)(out). Functionally, transport of potassium into the cell. Likely operates as a K(+):H(+) symporter. The protein is Probable potassium transport system protein Kup 2 of Rhizobium etli (strain ATCC 51251 / DSM 11541 / JCM 21823 / NBRC 15573 / CFN 42).